The chain runs to 119 residues: Methylglyoxal synthase (119 aa).

The MGS-like domain maps to 1-119 (MRIALIAHDK…GTADLIIRQF (119 aa)). Residues His-8, Lys-12, 34 to 37 (TGTT), and 54 to 55 (SG) each bind substrate. Catalysis depends on Asp-60, which acts as the Proton donor/acceptor. Substrate is bound at residue His-87.

It belongs to the methylglyoxal synthase family.

It carries out the reaction dihydroxyacetone phosphate = methylglyoxal + phosphate. Functionally, catalyzes the formation of methylglyoxal from dihydroxyacetone phosphate. This Clostridium botulinum (strain Alaska E43 / Type E3) protein is Methylglyoxal synthase.